A 447-amino-acid polypeptide reads, in one-letter code: Exodeoxyribonuclease 7 large subunit (447 aa).

This sequence belongs to the XseA family. Heterooligomer composed of large and small subunits.

Its subcellular location is the cytoplasm. The catalysed reaction is Exonucleolytic cleavage in either 5'- to 3'- or 3'- to 5'-direction to yield nucleoside 5'-phosphates.. Its function is as follows. Bidirectionally degrades single-stranded DNA into large acid-insoluble oligonucleotides, which are then degraded further into small acid-soluble oligonucleotides. In Lactobacillus helveticus (strain DPC 4571), this protein is Exodeoxyribonuclease 7 large subunit.